Consider the following 380-residue polypeptide: MAIILRSSDPLLSRIHPEPQEIDHFDNLPDSILLLIFNNIGDVKALGRCSVVSKRFHSLIPQVENVFVRVDCVISDDDSSSLLSDKPRSASAASPFSAIFRLVFKPLQALGQFLKRSGSSSLPSGSSPSSLLISGGDDGEIEQGGVTHHSPTQVLKNFDEIKFLKIELPSGELGIDDGVLLKWRAEFGSTLENCVILGASSVIPPTNSDKTEASSAPVAAVEDNGSIPESFYTNGGLKLRVVWTISSLIAASARHYLLQPIIAEHKTLDSLVLTDVDGQGVLCMNRDQLEELRVKPLSASSASKRTLVPALNMRLWYAPSLELPDGTVLKGATLVAIRPSESKKEVCDVSWVSSAFDEPYGVAAKMLVKRRTYCLEMNSF.

Residues 22–70 (IDHFDNLPDSILLLIFNNIGDVKALGRCSVVSKRFHSLIPQVENVFVRV) enclose the F-box domain.

This is F-box protein At4g18380 from Arabidopsis thaliana (Mouse-ear cress).